Here is a 1167-residue protein sequence, read N- to C-terminus: MSLRFLLGRSGSGKTAVCLEEIRRQLQEDPKGRAIVYLVPEQMTFQCEYALIHTEGVGGMIRAQVFSFTRLAWRVLQETGGMTRYHIHDVGVQMMIRKIIEQRKQELKLFGRAADKHGFIEQLNEMITECKRYCLTPGELRRHAKAFEDGPDQPGRRLLADKLSDVALVYEELERSLIGHYLDSEDYLRLLAEHIPRSSYLRDADIYIDGFHHFAPQEYMIIEQLLRHCRRVTVCLTIDRPYDDGMPDELHLFYLPAQTYRQLRELALSNDIAIEEPIVLSANRRHEDRALVHLEAQFHRRPLLPYGAKTDAVHLYEASNRRAEIEAVAREIIRLVRDEGARYRDIALIIRQTEAYRDLVKTVFFDFGIPYFMDEKEPMHHHPLIELVRAALETVVTRWRYEAVFRAVKTDLLFPTDGDLHMWREAADKLENYVLAYGIKGDKWTNNERWAYRRYQALDGLNVPQTDEERQFEDMLNEWREALAAPLRRLERRLRRAEDGRGFCMALYLFLEELQIPKKLEKMSAQAEADGRLVEARQHEQAWNAVVDLLDQYVEMLGTESLPLAEFVKIIEAGLDRLEFSLVPPAMDQVIVAQLDRSRLIDIKYAFVIGANDGVIPAKVKEDGLMAEVEREQLRELGVALAPGGREQLFYDPFFVYLALVCPSRRLYVTYPLADGEGKALMPSPLIKQLTELFPHAPVHLCGNDPFDAPAEKAEAFVTAPRATQTYLISQLRAWKRNYGIDPLWWDVYNTFIGHRDWKEQVRHAVSALFYTNGATPLKKQWSQRLYGKKIQASVSRMEQFQKCPYAHFASHGLRLKERNVFRLEAPDVGQLFHAAIKQIADRLREQHLDWRELSRPDCERLSAEAVERIAPLIQQQVLSSSHRYEYMKRKLKHVVARTTHVLSEHARASGFVPIGLELSFGPNGDLPPLRFRLPDGTVMELVGRIDRVDKAESSQGVLLRIIDYKSSAKTLDLTEVYYGLALQMLTYLDIVLTYAEQLVGQPALPAGVLYFHIHNPIVQAKQWVDDEVEMAKKLLEPFRMRGLLLADVEAIRLMDGRTEDGQWSLIVPAQLTKSGSIHSRSSVASPSDFAALRQHVRRLFIDIGGQIADGVVSIAPYKLKDKTACEFCVFKPVCQFDEALSGNEYRKLAPQTKEAVIEKLAEGKEG.

Residues 1–359 (MSLRFLLGRS…IRQTEAYRDL (359 aa)) form the UvrD-like helicase ATP-binding domain. Residue 8–15 (GRSGSGKT) participates in ATP binding. The 307-residue stretch at 282 to 588 (ANRRHEDRAL…EFSLVPPAMD (307 aa)) folds into the UvrD-like helicase C-terminal domain. [4Fe-4S] cluster contacts are provided by Cys-804, Cys-1126, Cys-1129, and Cys-1135.

Belongs to the helicase family. AddB/RexB type 1 subfamily. In terms of assembly, heterodimer of AddA and AddB. It depends on Mg(2+) as a cofactor. Requires [4Fe-4S] cluster as cofactor.

Functionally, the heterodimer acts as both an ATP-dependent DNA helicase and an ATP-dependent, dual-direction single-stranded exonuclease. Recognizes the chi site generating a DNA molecule suitable for the initiation of homologous recombination. The AddB subunit has 5' -&gt; 3' nuclease activity but not helicase activity. In Geobacillus kaustophilus (strain HTA426), this protein is ATP-dependent helicase/deoxyribonuclease subunit B.